A 206-amino-acid chain; its full sequence is Translation machinery-associated protein 22 (206 aa).

An SUI1 domain is found at 98 to 169 (VVIKREARTK…EVEKYIHSLL (72 aa)). The tract at residues 184–206 (SQKKKKKPTDEANSNNNNNNNNK) is disordered. The span at 196 to 206 (NSNNNNNNNNK) shows a compositional bias: low complexity.

It belongs to the DENR family. As to quaternary structure, interacts with the 40S ribosomal subunit.

It is found in the cytoplasm. The polypeptide is Translation machinery-associated protein 22 (TMA22) (Vanderwaltozyma polyspora (strain ATCC 22028 / DSM 70294 / BCRC 21397 / CBS 2163 / NBRC 10782 / NRRL Y-8283 / UCD 57-17) (Kluyveromyces polysporus)).